A 427-amino-acid polypeptide reads, in one-letter code: Glutamate-1-semialdehyde 2,1-aminomutase (427 aa).

Lysine 265 bears the N6-(pyridoxal phosphate)lysine mark.

This sequence belongs to the class-III pyridoxal-phosphate-dependent aminotransferase family. HemL subfamily. Homodimer. Requires pyridoxal 5'-phosphate as cofactor.

The protein localises to the cytoplasm. The enzyme catalyses (S)-4-amino-5-oxopentanoate = 5-aminolevulinate. It participates in porphyrin-containing compound metabolism; protoporphyrin-IX biosynthesis; 5-aminolevulinate from L-glutamyl-tRNA(Glu): step 2/2. The sequence is that of Glutamate-1-semialdehyde 2,1-aminomutase from Pseudomonas syringae pv. tomato (strain ATCC BAA-871 / DC3000).